The sequence spans 641 residues: Fructose-1,6-bisphosphatase class 3 (641 aa).

It belongs to the FBPase class 3 family. Mn(2+) is required as a cofactor.

The catalysed reaction is beta-D-fructose 1,6-bisphosphate + H2O = beta-D-fructose 6-phosphate + phosphate. It participates in carbohydrate biosynthesis; gluconeogenesis. This Latilactobacillus sakei subsp. sakei (strain 23K) (Lactobacillus sakei subsp. sakei) protein is Fructose-1,6-bisphosphatase class 3.